Reading from the N-terminus, the 446-residue chain is Probable D-serine dehydratase (446 aa).

Lys-116 is modified (N6-(pyridoxal phosphate)lysine).

Belongs to the serine/threonine dehydratase family. DsdA subfamily. Pyridoxal 5'-phosphate serves as cofactor.

The enzyme catalyses D-serine = pyruvate + NH4(+). This chain is Probable D-serine dehydratase, found in Bacillus anthracis (strain CDC 684 / NRRL 3495).